The chain runs to 257 residues: AN1-type zinc finger protein 2B (257 aa).

2 consecutive AN1-type zinc fingers follow at residues 4–52 and 94–142; these read PDLG…QKDI and KIFT…HPTS. Zn(2+)-binding residues include C10, C15, C25, C28, C33, H36, H42, C44, C100, C105, C115, C118, C123, H126, H132, and C134. Residues 141–151 are VCP/p97-interacting motif (VIM); the sequence is TSRAGLAAISR. The segment at 153 to 187 is disordered; sequence QGLASTSTVPSPSRTLPSSSSPSRATPQLPPRTTS. A compositionally biased stretch (low complexity) spans 156 to 179; sequence ASTSTVPSPSRTLPSSSSPSRATP. Phosphoserine is present on residues S163, S173, and S187. 2 consecutive UIM domains span residues 197-216 and 221-240; these read SEDE…AKPQ and QEEE…AEYQ. C254 carries the cysteine methyl ester modification. C254 carries the S-geranylgeranyl cysteine lipid modification. The CAAX motif motif lies at 254 to 257; it reads CSLC. Residues 255 to 257 constitute a propeptide, removed in mature form; the sequence is SLC.

Binds 'Lys-48'-linked polyubiquitin chains of ubiquitinated proteins. Associates with the proteasome complex; upon exposure to arsenite. Interacts (via VIM motif) with VCP; the interaction is direct. Interacts with BAG6. Interacts with IGF1R (nascent precursor form). Interacts with DERL1, FAF2, NPLOC4 and UFD1; probably through VCP. Phosphorylated by MAPK14. Phosphorylation has no effect on association with the proteasome complex.

The protein localises to the endoplasmic reticulum membrane. Functionally, plays a role in protein homeostasis by regulating both the translocation and the ubiquitin-mediated proteasomal degradation of nascent proteins at the endoplasmic reticulum. It is involved in the regulation of signal-mediated translocation of proteins into the endoplasmic reticulum. It also plays a role in the ubiquitin-mediated proteasomal degradation of proteins for which signal-mediated translocation to the endoplasmic reticulum has failed. May therefore function in the endoplasmic reticulum stress-induced pre-emptive quality control, a mechanism that selectively attenuates the translocation of newly synthesized proteins into the endoplasmic reticulum and reroutes them to the cytosol for proteasomal degradation. By controlling the steady-state expression of the IGF1R receptor, indirectly regulates the insulin-like growth factor receptor signaling pathway. The sequence is that of AN1-type zinc finger protein 2B from Rattus norvegicus (Rat).